The chain runs to 351 residues: UDP-3-O-acylglucosamine N-acyltransferase (351 aa).

His-240 serves as the catalytic Proton acceptor.

Belongs to the transferase hexapeptide repeat family. LpxD subfamily. As to quaternary structure, homotrimer.

It catalyses the reaction a UDP-3-O-[(3R)-3-hydroxyacyl]-alpha-D-glucosamine + a (3R)-hydroxyacyl-[ACP] = a UDP-2-N,3-O-bis[(3R)-3-hydroxyacyl]-alpha-D-glucosamine + holo-[ACP] + H(+). Its pathway is bacterial outer membrane biogenesis; LPS lipid A biosynthesis. In terms of biological role, catalyzes the N-acylation of UDP-3-O-acylglucosamine using 3-hydroxyacyl-ACP as the acyl donor. Is involved in the biosynthesis of lipid A, a phosphorylated glycolipid that anchors the lipopolysaccharide to the outer membrane of the cell. The chain is UDP-3-O-acylglucosamine N-acyltransferase from Methylacidiphilum infernorum (isolate V4) (Methylokorus infernorum (strain V4)).